A 105-amino-acid polypeptide reads, in one-letter code: Small ribosomal subunit protein uS10 (105 aa).

The protein belongs to the universal ribosomal protein uS10 family. As to quaternary structure, part of the 30S ribosomal subunit.

Functionally, involved in the binding of tRNA to the ribosomes. The sequence is that of Small ribosomal subunit protein uS10 from Rickettsia conorii (strain ATCC VR-613 / Malish 7).